The sequence spans 452 residues: Membrane-bound lytic murein transglycosylase D (452 aa).

The signal sequence occupies residues 1-15 (MKAKAILLASVLLVG). Cys16 carries N-palmitoyl cysteine lipidation. Cys16 is lipidated: S-diacylglycerol cysteine. The segment at 113 to 198 (NMPMELVLLP…LLTVAAYNSG (86 aa)) is slt-type domain. Glu125 is a catalytic residue. 2 consecutive LysM domains span residues 341–384 (RVYT…SLTI) and 400–448 (ITYR…KNNN).

Belongs to the transglycosylase Slt family.

The protein resides in the cell membrane. It catalyses the reaction Exolytic cleavage of the (1-&gt;4)-beta-glycosidic linkage between N-acetylmuramic acid (MurNAc) and N-acetylglucosamine (GlcNAc) residues in peptidoglycan, from either the reducing or the non-reducing ends of the peptidoglycan chains, with concomitant formation of a 1,6-anhydrobond in the MurNAc residue.. Functionally, murein-degrading enzyme. May play a role in recycling of muropeptides during cell elongation and/or cell division. The polypeptide is Membrane-bound lytic murein transglycosylase D (mltD) (Escherichia coli O6:H1 (strain CFT073 / ATCC 700928 / UPEC)).